Consider the following 98-residue polypeptide: NADH-ubiquinone oxidoreductase chain 4L (98 aa).

3 helical membrane passes run 1–21 (MSMVYMNIMMAFTVSLVGLLM), 29–49 (SLLCLEGMMLSLFVMAALTIL), and 61–81 (IILLVFAACEAALGLSLLVMV).

The protein belongs to the complex I subunit 4L family. Core subunit of respiratory chain NADH dehydrogenase (Complex I) which is composed of 45 different subunits.

The protein resides in the mitochondrion inner membrane. The catalysed reaction is a ubiquinone + NADH + 5 H(+)(in) = a ubiquinol + NAD(+) + 4 H(+)(out). In terms of biological role, core subunit of the mitochondrial membrane respiratory chain NADH dehydrogenase (Complex I) which catalyzes electron transfer from NADH through the respiratory chain, using ubiquinone as an electron acceptor. Part of the enzyme membrane arm which is embedded in the lipid bilayer and involved in proton translocation. The polypeptide is NADH-ubiquinone oxidoreductase chain 4L (MT-ND4L) (Bos indicus (Zebu)).